Consider the following 743-residue polypeptide: DNA ligase 2 (743 aa).

Residues 45–49 (DADFD), 94–95 (SL), and Glu-125 contribute to the NAD(+) site. The active-site N6-AMP-lysine intermediate is the Lys-127. The NAD(+) site is built by Arg-148, Glu-185, Lys-301, and Lys-325. Zn(2+) is bound by residues Cys-419, Cys-422, Cys-438, and Cys-444. The region spanning 639-728 (EGPRPLEGLT…PERAKEAALP (90 aa)) is the BRCT domain. The disordered stretch occupies residues 720–743 (ERAKEAALPVPEAAPAADPENSGE). A compositionally biased stretch (low complexity) spans 725-743 (AALPVPEAAPAADPENSGE).

This sequence belongs to the NAD-dependent DNA ligase family. LigA subfamily. The cofactor is Mg(2+). Requires Mn(2+) as cofactor.

The catalysed reaction is NAD(+) + (deoxyribonucleotide)n-3'-hydroxyl + 5'-phospho-(deoxyribonucleotide)m = (deoxyribonucleotide)n+m + AMP + beta-nicotinamide D-nucleotide.. Functionally, DNA ligase that catalyzes the formation of phosphodiester linkages between 5'-phosphoryl and 3'-hydroxyl groups in double-stranded DNA using NAD as a coenzyme and as the energy source for the reaction. It is essential for DNA replication and repair of damaged DNA. The chain is DNA ligase 2 from Streptomyces griseus subsp. griseus (strain JCM 4626 / CBS 651.72 / NBRC 13350 / KCC S-0626 / ISP 5235).